A 411-amino-acid polypeptide reads, in one-letter code: Imidazolonepropionase (411 aa).

The Fe(3+) site is built by His78 and His80. Zn(2+) contacts are provided by His78 and His80. 4-imidazolone-5-propanoate contacts are provided by Arg87, Tyr150, and His183. Residue Tyr150 coordinates N-formimidoyl-L-glutamate. Residue His248 participates in Fe(3+) binding. His248 contacts Zn(2+). Gln251 is a binding site for 4-imidazolone-5-propanoate. A Fe(3+)-binding site is contributed by Asp322. Position 322 (Asp322) interacts with Zn(2+). Residues Asn324 and Gly326 each coordinate N-formimidoyl-L-glutamate. Residue Thr327 coordinates 4-imidazolone-5-propanoate.

It belongs to the metallo-dependent hydrolases superfamily. HutI family. Zn(2+) serves as cofactor. It depends on Fe(3+) as a cofactor.

It is found in the cytoplasm. It carries out the reaction 4-imidazolone-5-propanoate + H2O = N-formimidoyl-L-glutamate. The protein operates within amino-acid degradation; L-histidine degradation into L-glutamate; N-formimidoyl-L-glutamate from L-histidine: step 3/3. Its function is as follows. Catalyzes the hydrolytic cleavage of the carbon-nitrogen bond in imidazolone-5-propanoate to yield N-formimidoyl-L-glutamate. It is the third step in the universal histidine degradation pathway. In Flavobacterium psychrophilum (strain ATCC 49511 / DSM 21280 / CIP 103535 / JIP02/86), this protein is Imidazolonepropionase.